Reading from the N-terminus, the 1125-residue chain is Phytochrome A (1125 aa).

2 stretches are compositionally biased toward low complexity: residues 1–14 (MSSSRPSHSSSNSA) and 39–48 (SGSSFDYSSS). Disordered regions lie at residues 1-22 (MSSSRPSHSSSNSARSRHSARI) and 38-64 (ESGSSFDYSSSVRVTDSVGGDQPPRSD). The region spanning 218–401 (SMERLCDTMV…VFAIHVNKEL (184 aa)) is the GAF domain. Phytochromobilin is bound at residue Cys-323. 2 consecutive PAS domains span residues 617 to 687 (VTSE…LQGK) and 750 to 821 (DYKA…VNLG). Residues 901-1117 (YLKKQIWNPL…SFIISVELAG (217 aa)) enclose the Histidine kinase domain.

This sequence belongs to the phytochrome family. Homodimer. Contains one covalently linked phytochromobilin chromophore.

Functionally, regulatory photoreceptor which exists in two forms that are reversibly interconvertible by light: the Pr form that absorbs maximally in the red region of the spectrum and the Pfr form that absorbs maximally in the far-red region. Photoconversion of Pr to Pfr induces an array of morphogenic responses, whereas reconversion of Pfr to Pr cancels the induction of those responses. Pfr controls the expression of a number of nuclear genes including those encoding the small subunit of ribulose-bisphosphate carboxylase, chlorophyll A/B binding protein, protochlorophyllide reductase, rRNA, etc. It also controls the expression of its own gene(s) in a negative feedback fashion. This is Phytochrome A (PHYA) from Populus tremuloides (Quaking aspen).